We begin with the raw amino-acid sequence, 260 residues long: MFDIGVNLTSSQFVKDRDDVVTRALAAGVSGMLLTGTNLHESQQAQKLAQRYACCWSTAGVHPHDSSQWQSETEDAIVALARQPDVVAIGECGLDFNRNFSTPQEQERAFQAQLRIAAELQMPVFMHCRDAHARFLALLEPWLDKLPGAVLHCFTGTREEMQECIDRGLYIGITGWVCDERRGLELRELLPFIPAEKLLIETDAPYLLPRDLTPKPASRRNEPAHLAHILARVAHWRGEDPQWLAATTDANVKTLFGIAF.

Positions 91, 127, and 152 each coordinate a divalent metal cation.

Belongs to the metallo-dependent hydrolases superfamily. TatD-type hydrolase family. TatD subfamily. In terms of assembly, monomer. Mg(2+) serves as cofactor.

The protein resides in the cytoplasm. Functionally, 3'-5' exonuclease that prefers single-stranded DNA and RNA. May play a role in the H(2)O(2)-induced DNA damage repair. This is 3'-5' ssDNA/RNA exonuclease TatD from Citrobacter koseri (strain ATCC BAA-895 / CDC 4225-83 / SGSC4696).